Here is a 149-residue protein sequence, read N- to C-terminus: Nucleoside diphosphate kinase (149 aa).

Lys-9, Phe-57, Arg-85, Thr-91, Arg-102, and Asn-112 together coordinate ATP. His-115 (pros-phosphohistidine intermediate) is an active-site residue.

This sequence belongs to the NDK family. The cofactor is Mg(2+).

It localises to the cytoplasm. The enzyme catalyses a 2'-deoxyribonucleoside 5'-diphosphate + ATP = a 2'-deoxyribonucleoside 5'-triphosphate + ADP. It carries out the reaction a ribonucleoside 5'-diphosphate + ATP = a ribonucleoside 5'-triphosphate + ADP. In terms of biological role, major role in the synthesis of nucleoside triphosphates other than ATP. The ATP gamma phosphate is transferred to the NDP beta phosphate via a ping-pong mechanism, using a phosphorylated active-site intermediate. In Methanospirillum hungatei JF-1 (strain ATCC 27890 / DSM 864 / NBRC 100397 / JF-1), this protein is Nucleoside diphosphate kinase.